We begin with the raw amino-acid sequence, 77 residues long: Large ribosomal subunit protein bL28 (77 aa).

The segment at 1–21 is disordered; the sequence is MARVCKVTGKRPMTGNNVSHA.

The protein belongs to the bacterial ribosomal protein bL28 family.

In Chromobacterium violaceum (strain ATCC 12472 / DSM 30191 / JCM 1249 / CCUG 213 / NBRC 12614 / NCIMB 9131 / NCTC 9757 / MK), this protein is Large ribosomal subunit protein bL28.